Reading from the N-terminus, the 288-residue chain is Acetyl-coenzyme A carboxylase carboxyl transferase subunit beta (288 aa).

Positions 34–288 (LFAKCPACKH…HLVAFHGGGQ (255 aa)) constitute a CoA carboxyltransferase N-terminal domain. C38, C41, C56, and C59 together coordinate Zn(2+). The C4-type zinc-finger motif lies at 38-59 (CPACKHMIYKKDLGLAKICPTC).

Belongs to the AccD/PCCB family. In terms of assembly, acetyl-CoA carboxylase is a heterohexamer composed of biotin carboxyl carrier protein (AccB), biotin carboxylase (AccC) and two subunits each of ACCase subunit alpha (AccA) and ACCase subunit beta (AccD). Zn(2+) serves as cofactor.

The protein localises to the cytoplasm. It carries out the reaction N(6)-carboxybiotinyl-L-lysyl-[protein] + acetyl-CoA = N(6)-biotinyl-L-lysyl-[protein] + malonyl-CoA. Its pathway is lipid metabolism; malonyl-CoA biosynthesis; malonyl-CoA from acetyl-CoA: step 1/1. Component of the acetyl coenzyme A carboxylase (ACC) complex. Biotin carboxylase (BC) catalyzes the carboxylation of biotin on its carrier protein (BCCP) and then the CO(2) group is transferred by the transcarboxylase to acetyl-CoA to form malonyl-CoA. The protein is Acetyl-coenzyme A carboxylase carboxyl transferase subunit beta of Streptococcus pyogenes serotype M1.